Reading from the N-terminus, the 483-residue chain is Altronate oxidoreductase (483 aa).

18–29 (IIQFGEGNFLRA) contributes to the NAD(+) binding site.

This sequence belongs to the mannitol dehydrogenase family. UxaB subfamily.

It carries out the reaction D-altronate + NAD(+) = keto-D-tagaturonate + NADH + H(+). The protein operates within carbohydrate metabolism; pentose and glucuronate interconversion. This is Altronate oxidoreductase from Klebsiella pneumoniae subsp. pneumoniae (strain ATCC 700721 / MGH 78578).